A 202-amino-acid polypeptide reads, in one-letter code: Imidazoleglycerol-phosphate dehydratase (202 aa).

This sequence belongs to the imidazoleglycerol-phosphate dehydratase family.

The protein localises to the cytoplasm. The catalysed reaction is D-erythro-1-(imidazol-4-yl)glycerol 3-phosphate = 3-(imidazol-4-yl)-2-oxopropyl phosphate + H2O. It functions in the pathway amino-acid biosynthesis; L-histidine biosynthesis; L-histidine from 5-phospho-alpha-D-ribose 1-diphosphate: step 6/9. The sequence is that of Imidazoleglycerol-phosphate dehydratase from Acinetobacter baumannii (strain AYE).